A 453-amino-acid chain; its full sequence is Bifunctional protein GlmU (453 aa).

Residues 1–226 are pyrophosphorylase; sequence MSFSAVILAA…PIEVEGVNNR (226 aa). UDP-N-acetyl-alpha-D-glucosamine contacts are provided by residues 8-11, lysine 22, glutamine 73, 78-79, 100-102, glycine 137, glutamate 151, asparagine 166, and asparagine 224; these read LAAG, GT, and YGD. Aspartate 102 provides a ligand contact to Mg(2+). Asparagine 224 contributes to the Mg(2+) binding site. Residues 227-247 are linker; the sequence is IQLARLERAYQAMQAERLLEQ. Residues 248–453 are N-acetyltransferase; sequence GVMLRDPSRF…KGWKRPVKQK (206 aa). UDP-N-acetyl-alpha-D-glucosamine contacts are provided by arginine 330 and lysine 348. Histidine 360 serves as the catalytic Proton acceptor. UDP-N-acetyl-alpha-D-glucosamine contacts are provided by tyrosine 363 and asparagine 374. Residues alanine 377, 383–384, serine 402, alanine 420, and arginine 437 each bind acetyl-CoA; that span reads NY.

The protein in the N-terminal section; belongs to the N-acetylglucosamine-1-phosphate uridyltransferase family. In the C-terminal section; belongs to the transferase hexapeptide repeat family. In terms of assembly, homotrimer. The cofactor is Mg(2+).

Its subcellular location is the cytoplasm. The catalysed reaction is alpha-D-glucosamine 1-phosphate + acetyl-CoA = N-acetyl-alpha-D-glucosamine 1-phosphate + CoA + H(+). It carries out the reaction N-acetyl-alpha-D-glucosamine 1-phosphate + UTP + H(+) = UDP-N-acetyl-alpha-D-glucosamine + diphosphate. It functions in the pathway nucleotide-sugar biosynthesis; UDP-N-acetyl-alpha-D-glucosamine biosynthesis; N-acetyl-alpha-D-glucosamine 1-phosphate from alpha-D-glucosamine 6-phosphate (route II): step 2/2. Its pathway is nucleotide-sugar biosynthesis; UDP-N-acetyl-alpha-D-glucosamine biosynthesis; UDP-N-acetyl-alpha-D-glucosamine from N-acetyl-alpha-D-glucosamine 1-phosphate: step 1/1. It participates in bacterial outer membrane biogenesis; LPS lipid A biosynthesis. In terms of biological role, catalyzes the last two sequential reactions in the de novo biosynthetic pathway for UDP-N-acetylglucosamine (UDP-GlcNAc). The C-terminal domain catalyzes the transfer of acetyl group from acetyl coenzyme A to glucosamine-1-phosphate (GlcN-1-P) to produce N-acetylglucosamine-1-phosphate (GlcNAc-1-P), which is converted into UDP-GlcNAc by the transfer of uridine 5-monophosphate (from uridine 5-triphosphate), a reaction catalyzed by the N-terminal domain. This chain is Bifunctional protein GlmU, found in Photobacterium profundum (strain SS9).